The chain runs to 368 residues: Ribulose bisphosphate carboxylase-like protein 1 (368 aa).

This sequence belongs to the RuBisCO large chain family. Type IV subfamily.

Functionally, unknown. Probably does not have RuBisCO activity. This Rhodopseudomonas palustris (strain ATCC BAA-98 / CGA009) protein is Ribulose bisphosphate carboxylase-like protein 1 (rlp1).